The chain runs to 362 residues: Protein MGF 360-19R (362 aa).

Residues 66–98 form an ANK repeat; the sequence is LLNTALMKAVQDNNYELIKLFTEWGANINYGLI.

It belongs to the asfivirus MGF 360 family.

In terms of biological role, plays a role in virus cell tropism, and may be required for efficient virus replication in macrophages. The sequence is that of Protein MGF 360-19R from Ornithodoros (relapsing fever ticks).